A 515-amino-acid polypeptide reads, in one-letter code: N-acetylglucosamine-1-phosphodiester alpha-N-acetylglucosaminidase (515 aa).

The N-terminal stretch at 1-25 (MATSTGRWLLLRLALFGFLWEASGG) is a signal peptide. A propeptide spans 26 to 49 (LDSGASRDDDLLLPYPRARARLPR) (removed in mature form). Residues 50–448 (DCTRVRAGNR…AGELSFFTRT (399 aa)) are Lumenal-facing. Intrachain disulfides connect Cys115-Cys148, Cys132-Cys323, Cys307-Cys314, Cys362-Cys373, and Cys380-Cys389. Residues Asn208, Asn214, and Asn296 are each glycosylated (N-linked (GlcNAc...) asparagine). One can recognise an EGF-like domain in the interval 358–390 (DELDCGPSNCSQHGLCTETGCRCDAGWTGSNCS). 3 N-linked (GlcNAc...) asparagine glycosylation sites follow: Asn366, Asn388, and Asn420. Residues 449 to 469 (AWLALTLALAFLLLISTAANL) traverse the membrane as a helical segment. The Cytoplasmic segment spans residues 470–515 (SLLLSRAERNRRLHGDYAYHPLQEMNGEPLAAEKEQPGGAHNPFKD). A mediates the interaction with AP4M1 region spans residues 486–493 (YAYHPLQE). Residues 488–491 (YHPL) carry the Tyrosine-based internalization motif motif. Positions 511-515 (NPFKD) match the NPF internalization motif motif.

In terms of assembly, homotetramer arranged as two disulfide-linked homodimers. Interacts with AP4M1. In terms of processing, the precursor is cleaved and activated in the trans-Golgi network by a furin endopeptidase. Isoform 2 may be brain-specific.

The protein localises to the golgi apparatus. It is found in the golgi stack membrane. Its subcellular location is the trans-Golgi network. The catalysed reaction is N(4)-[6-(N-acetyl-alpha-D-glucosaminyl-1-phospho)-alpha-D-mannosyl-(1-&gt;2)-alpha-D-mannosyl-(glycan)]-L-asparaginyl-[protein] + H2O = N(4)-[6-phospho-alpha-D-mannosyl-(1-&gt;2)-alpha-D-mannosyl-(glycan)]-L-asparaginyl-[protein] + N-acetyl-D-glucosamine + H(+). Its pathway is protein modification; protein glycosylation. In terms of biological role, catalyzes the second step in the formation of the mannose 6-phosphate targeting signal on lysosomal enzyme oligosaccharides by removing GlcNAc residues from GlcNAc-alpha-P-mannose moieties, which are formed in the first step. Also hydrolyzes UDP-GlcNAc, a sugar donor for Golgi N-acetylglucosaminyltransferases. This Homo sapiens (Human) protein is N-acetylglucosamine-1-phosphodiester alpha-N-acetylglucosaminidase (NAGPA).